We begin with the raw amino-acid sequence, 288 residues long: Light-independent protochlorophyllide reductase iron-sulfur ATP-binding protein (288 aa).

ATP is bound by residues G12 to T17 and K41. S16 is a Mg(2+) binding site. [4Fe-4S] cluster-binding residues include C97 and C131. N182–R183 lines the ATP pocket.

This sequence belongs to the NifH/BchL/ChlL family. Homodimer. Protochlorophyllide reductase is composed of three subunits; ChlL, ChlN and ChlB. The cofactor is [4Fe-4S] cluster.

The catalysed reaction is chlorophyllide a + oxidized 2[4Fe-4S]-[ferredoxin] + 2 ADP + 2 phosphate = protochlorophyllide a + reduced 2[4Fe-4S]-[ferredoxin] + 2 ATP + 2 H2O. The protein operates within porphyrin-containing compound metabolism; chlorophyll biosynthesis (light-independent). In terms of biological role, component of the dark-operative protochlorophyllide reductase (DPOR) that uses Mg-ATP and reduced ferredoxin to reduce ring D of protochlorophyllide (Pchlide) to form chlorophyllide a (Chlide). This reaction is light-independent. The L component serves as a unique electron donor to the NB-component of the complex, and binds Mg-ATP. The sequence is that of Light-independent protochlorophyllide reductase iron-sulfur ATP-binding protein from Picosynechococcus sp. (strain ATCC 27264 / PCC 7002 / PR-6) (Agmenellum quadruplicatum).